Here is a 290-residue protein sequence, read N- to C-terminus: MDPSVLLYNQLKAADPFFLLAGPNVIESEEHIMRMAKHIKTISSKFGIPLIFKSSFDKANRTSSKSFRGPGIVEGLKILEKVKIAYDIPIVTDVHEASQCEPVGRVADIIQIPAFLCRQTDLLVAAAKTGKIINIKKGQFCAPSVMANSAEKVRLAGNPNVMVCERGTMFGYNDLIVDPRNLEWMREANCPVVADITHSLQQPAGKKLDGGGVASGGLRELIPCIARTSVAVGVDGIFMEVHDDPLNAPVDGPTQWPLRHLEELLEELIAISRVSKGKKPFNIDLTPFRE.

It belongs to the KdsA family.

It localises to the cytoplasm. The enzyme catalyses D-arabinose 5-phosphate + phosphoenolpyruvate + H2O = 3-deoxy-alpha-D-manno-2-octulosonate-8-phosphate + phosphate. The polypeptide is 2-dehydro-3-deoxyphosphooctonate aldolase (KDSA) (Pisum sativum (Garden pea)).